A 220-amino-acid chain; its full sequence is Protein CREG1 (220 aa).

Positions 1–31 are cleaved as a signal peptide; it reads MAARAPELARSLLAALLAPALVALLVSPASG. The interval 30-53 is disordered; it reads SGRGGRDHGDWDVDRRLPPLPPRE. Over residues 33-53 the composition is skewed to basic and acidic residues; it reads GGRDHGDWDVDRRLPPLPPRE. N-linked (GlcNAc...) asparagine glycans are attached at residues N160 and N216.

This sequence belongs to the CREG family. In terms of assembly, homodimer. Interacts with IGF2R; the interaction is dependent on glycosylation. In terms of processing, N-glycosylated. Widely expressed.

The protein localises to the secreted. Functionally, may contribute to the transcriptional control of cell growth and differentiation. Antagonizes transcriptional activation and cellular transformation by the adenovirus E1A protein. The transcriptional control activity of cell growth requires interaction with IGF2R. The polypeptide is Protein CREG1 (Creg1) (Mus musculus (Mouse)).